A 79-amino-acid polypeptide reads, in one-letter code: uncharacterized protein (79 aa).

This is an uncharacterized protein from Sulfolobus islandicus filamentous virus (isolate Iceland/Hveragerdi) (SIFV).